We begin with the raw amino-acid sequence, 118 residues long: UPF0102 protein DICTH_1420 (118 aa).

It belongs to the UPF0102 family.

The sequence is that of UPF0102 protein DICTH_1420 from Dictyoglomus thermophilum (strain ATCC 35947 / DSM 3960 / H-6-12).